Here is a 452-residue protein sequence, read N- to C-terminus: Ribosomal protein uS12 methylthiotransferase RimO (452 aa).

The region spanning 5-116 (PTIAFSHLGC…IVDVLQRTES (112 aa)) is the MTTase N-terminal domain. The [4Fe-4S] cluster site is built by Cys-14, Cys-50, Cys-79, Cys-154, Cys-158, and Cys-161. A Radical SAM core domain is found at 140-369 (TTTSAVAYLR…MATQQPIAER (230 aa)). Residues 372–438 (RAQIGRLVDV…IYDLHGEVAS (67 aa)) enclose the TRAM domain.

This sequence belongs to the methylthiotransferase family. RimO subfamily. It depends on [4Fe-4S] cluster as a cofactor.

It is found in the cytoplasm. The catalysed reaction is L-aspartate(89)-[ribosomal protein uS12]-hydrogen + (sulfur carrier)-SH + AH2 + 2 S-adenosyl-L-methionine = 3-methylsulfanyl-L-aspartate(89)-[ribosomal protein uS12]-hydrogen + (sulfur carrier)-H + 5'-deoxyadenosine + L-methionine + A + S-adenosyl-L-homocysteine + 2 H(+). Functionally, catalyzes the methylthiolation of an aspartic acid residue of ribosomal protein uS12. In Synechococcus elongatus (strain ATCC 33912 / PCC 7942 / FACHB-805) (Anacystis nidulans R2), this protein is Ribosomal protein uS12 methylthiotransferase RimO.